An 837-amino-acid polypeptide reads, in one-letter code: Tuftelin-interacting protein 11 (837 aa).

Composition is skewed to basic and acidic residues over residues 1-13 and 53-64; these read MSLS…GEGR and VWAERDSDDERP. Disordered stretches follow at residues 1 to 21, 53 to 72, and 85 to 133; these read MSLS…DDER, VWAE…KRAR, and LKKG…KGFA. Positions 1–50 are required for interaction with DHX15; the sequence is MSLSHLYRDGEGRIDDDDDERENFEITDWDLQNEFNPNRQRHWQTKEEAT. A phosphoserine mark is found at Ser-2, Ser-59, and Ser-98. Acidic residues predominate over residues 91–102; the sequence is EEAELEDSDDEE. The span at 103 to 116 shows a compositional bias: basic and acidic residues; sequence KPVKQDDFPKDFGP. Ser-144 bears the Phosphoserine mark. The region spanning 149 to 195 is the G-patch domain; sequence TKGIGQKLLQKMGYVPGRGLGKNAQGIINPIEAKQRKGKGAVGAYGS. Positions 179-236 are disordered; it reads IEAKQRKGKGAVGAYGSERTTQSMQDFPVVDSEEEAEEEFQKELSQWRKDPSGSKKKP. A Phosphoserine modification is found at Ser-210. The segment covering 217 to 231 has biased composition (basic and acidic residues); the sequence is EFQKELSQWRKDPSG. A Nuclear localization signal motif is present at residues 700-705; the sequence is VKDKFN. Residues 710-734 form a required for nuclear speckle localization region; it reads IMNRAVSSNVGAYMQPGARENIAYL.

It belongs to the TFP11/STIP family. As to quaternary structure, identified in the spliceosome C complex. Found in the Intron Large (IL) complex, a post-mRNA release spliceosomal complex containing the excised intron, U2, U5 and U6 snRNPs, and splicing factors. Interacts with TUFT1. Interacts with DHX15; indicative for a recruitment of DHX15 to the IL complex. Interacts with GCFC2.

The protein resides in the cytoplasm. Its subcellular location is the nucleus. Its function is as follows. Involved in pre-mRNA splicing, specifically in spliceosome disassembly during late-stage splicing events. Intron turnover seems to proceed through reactions in two lariat-intron associated complexes termed Intron Large (IL) and Intron Small (IS). In cooperation with DHX15 seems to mediate the transition of the U2, U5 and U6 snRNP-containing IL complex to the snRNP-free IS complex leading to efficient debranching and turnover of excised introns. May play a role in the differentiation of ameloblasts and odontoblasts or in the forming of the enamel extracellular matrix. The polypeptide is Tuftelin-interacting protein 11 (TFIP11) (Pan troglodytes (Chimpanzee)).